A 456-amino-acid chain; its full sequence is MMDHLVETNSVPSRLVEERLDEIRRVMGKADDDPLRIVGVGAGAWGSVFIAMLQENYGKFRGKVSVRIWRRGGRAIDKATAEHLFEVINSREELLRRLIRRCAYLKYVEARLGDRVLYADEILKDGFCLNMIETPLCPLKVVTNLQEAVWDADIVINGLPSTETFQVFNEISKYWKERVNAPVIISLAKGVEAEFEPHPRIVTPTQMIHRATGIPLENILYLGGPNIASEVYNKEYANARICGSEKWRKPLGKFLRQSHFIVWDNSDLITHEVMGGLKNVYAIGAGMVATLTKESATSKSVYFAHCTSEMIFITHLLAKEPEKLAGPLLADTYVTLLKGRNAWYGQKLAKGELSLEMGDSIKGKGMIQGVSAVKAFFELLNQSSLSLQHPEEGKPVTPAELCPILKMLYRILITREFSCEAILEALRDETMNDPRELIEIAHSHLFFQPWLLGQKP.

NAD(+) is bound by residues 41–46 (GAGAWG), K189, and A228. K189 is a substrate binding site. Catalysis depends on K278, which acts as the Proton acceptor. NAD(+) contacts are provided by R340 and Q368. 340-341 (RN) contributes to the substrate binding site.

It belongs to the NAD-dependent glycerol-3-phosphate dehydrogenase family. In terms of assembly, homodimer.

The protein localises to the cytoplasm. The enzyme catalyses sn-glycerol 3-phosphate + NAD(+) = dihydroxyacetone phosphate + NADH + H(+). In terms of biological role, required for glycerol-3-phosphate (G3P) accumulation during systemic acquired resistance (SAR) establishment. In Arabidopsis thaliana (Mouse-ear cress), this protein is Glycerol-3-phosphate dehydrogenase [NAD(+)] At3g07690, cytosolic.